The following is a 776-amino-acid chain: Reticulon-1 (776 aa).

Disordered stretches follow at residues 1-103 (MAAP…GEGS), 136-168 (ISES…DSGI), 204-244 (EVKH…EPAP), and 285-580 (LTEI…APPP). Positions 204–240 (EVKHQEQNHPELEDKDLDFKNKDTDISIKPEGVREPD) are enriched in basic and acidic residues. Residue Ser327 is modified to Phosphoserine. A compositionally biased stretch (low complexity) spans 328-341 (PGSITPPSSGTEPS). Residues Ser350, Ser352, and Ser487 each carry the phosphoserine modification. Residues 497 to 511 (AIREETGVRAEERAP) show a composition bias toward basic and acidic residues. The Reticulon domain maps to 589–776 (AIDLLYWRDI…KIPGAKRHAE (188 aa)). 2 consecutive transmembrane segments (helical) span residues 603–623 (IVFG…VVSV) and 705–725 (FAVL…LTLL).

As to quaternary structure, interacts with NDRG1. Interacts with BACE1. Interacts with TMEM33. Phosphorylated.

It is found in the endoplasmic reticulum membrane. It localises to the golgi apparatus membrane. In terms of biological role, inhibits amyloid precursor protein processing, probably by blocking BACE1 activity. This chain is Reticulon-1 (RTN1), found in Pan troglodytes (Chimpanzee).